The primary structure comprises 156 residues: 6,7-dimethyl-8-ribityllumazine synthase (156 aa).

5-amino-6-(D-ribitylamino)uracil-binding positions include F23, 57–59 (AYE), and 81–83 (AII). 86 to 87 (GT) contributes to the (2S)-2-hydroxy-3-oxobutyl phosphate binding site. The active-site Proton donor is H89. F114 lines the 5-amino-6-(D-ribitylamino)uracil pocket. R128 contributes to the (2S)-2-hydroxy-3-oxobutyl phosphate binding site.

This sequence belongs to the DMRL synthase family.

It catalyses the reaction (2S)-2-hydroxy-3-oxobutyl phosphate + 5-amino-6-(D-ribitylamino)uracil = 6,7-dimethyl-8-(1-D-ribityl)lumazine + phosphate + 2 H2O + H(+). The protein operates within cofactor biosynthesis; riboflavin biosynthesis; riboflavin from 2-hydroxy-3-oxobutyl phosphate and 5-amino-6-(D-ribitylamino)uracil: step 1/2. Functionally, catalyzes the formation of 6,7-dimethyl-8-ribityllumazine by condensation of 5-amino-6-(D-ribitylamino)uracil with 3,4-dihydroxy-2-butanone 4-phosphate. This is the penultimate step in the biosynthesis of riboflavin. The polypeptide is 6,7-dimethyl-8-ribityllumazine synthase (Helicobacter pylori (strain ATCC 700392 / 26695) (Campylobacter pylori)).